A 264-amino-acid chain; its full sequence is Hydroxyethylthiazole kinase (264 aa).

Residue Met41 coordinates substrate. ATP contacts are provided by Lys117 and Ser163. Gly190 contributes to the substrate binding site.

It belongs to the Thz kinase family. Mg(2+) serves as cofactor.

The enzyme catalyses 5-(2-hydroxyethyl)-4-methylthiazole + ATP = 4-methyl-5-(2-phosphooxyethyl)-thiazole + ADP + H(+). It participates in cofactor biosynthesis; thiamine diphosphate biosynthesis; 4-methyl-5-(2-phosphoethyl)-thiazole from 5-(2-hydroxyethyl)-4-methylthiazole: step 1/1. In terms of biological role, catalyzes the phosphorylation of the hydroxyl group of 4-methyl-5-beta-hydroxyethylthiazole (THZ). The protein is Hydroxyethylthiazole kinase of Thermoanaerobacter pseudethanolicus (strain ATCC 33223 / 39E) (Clostridium thermohydrosulfuricum).